Consider the following 188-residue polypeptide: Pterocarpan synthase 1 (188 aa).

The first 23 residues, 1–23, serve as a signal peptide directing secretion; that stretch reads MAKSTTFFISLTLPFLLLSVVTA. Residue Asn-127 is glycosylated (N-linked (GlcNAc...) asparagine).

Belongs to the plant dirigent protein family. In terms of assembly, homodimer.

The protein resides in the secreted. Its subcellular location is the extracellular space. It localises to the apoplast. The catalysed reaction is a (4R)-4,2'-dihydroxyisoflavan = a pterocarpan + H2O.. It carries out the reaction (3R,4R)-7,2'-dihydroxy-4'-methoxyisoflavanol = (-)-medicarpin + H2O. It catalyses the reaction (3S,4R)-7,2'-dihydroxy-4'-methoxyisoflavanol = (+)-medicarpin + H2O. The enzyme catalyses (3R,4R)-3-(6-hydroxy-1,3-benzodioxol-5-yl)-3,4-dihydro-2H-chromene-4,7-diol = (-)-maackiain + H2O. The catalysed reaction is (3R,4R)-7,2',4'-trihydroxyisoflavanol = (6aR,11aR)-3,9-dihydroxypterocarpan + H2O. Involved in pterocarpan phytoalexin biosynthesis. Catalyzes the last step in the biosynthesis of the phytoalexin medicarpin, and thereby contributes to plant defense reactions. Dirigent proteins impart stereoselectivity on the phenoxy radical-coupling reaction, yielding optically active lignans from two molecules of coniferyl alcohol in the biosynthesis of lignans, flavonolignans, and alkaloids and thus plays a central role in plant secondary metabolism. The protein is Pterocarpan synthase 1 of Glycyrrhiza echinata (Licorice).